We begin with the raw amino-acid sequence, 228 residues long: Large ribosomal subunit protein uL1 (228 aa).

The protein belongs to the universal ribosomal protein uL1 family. Part of the 50S ribosomal subunit.

Binds directly to 23S rRNA. The L1 stalk is quite mobile in the ribosome, and is involved in E site tRNA release. Its function is as follows. Protein L1 is also a translational repressor protein, it controls the translation of the L11 operon by binding to its mRNA. The chain is Large ribosomal subunit protein uL1 from Clavibacter michiganensis subsp. michiganensis (strain NCPPB 382).